We begin with the raw amino-acid sequence, 180 residues long: Translation initiation factor IF-3 (180 aa).

This sequence belongs to the IF-3 family. As to quaternary structure, monomer.

It is found in the cytoplasm. IF-3 binds to the 30S ribosomal subunit and shifts the equilibrium between 70S ribosomes and their 50S and 30S subunits in favor of the free subunits, thus enhancing the availability of 30S subunits on which protein synthesis initiation begins. The polypeptide is Translation initiation factor IF-3 (Caldanaerobacter subterraneus subsp. tengcongensis (strain DSM 15242 / JCM 11007 / NBRC 100824 / MB4) (Thermoanaerobacter tengcongensis)).